A 66-amino-acid chain; its full sequence is Large ribosomal subunit protein bL33c (66 aa).

Belongs to the bacterial ribosomal protein bL33 family.

The protein resides in the plastid. It is found in the chloroplast. The chain is Large ribosomal subunit protein bL33c from Calycanthus floridus var. glaucus (Eastern sweetshrub).